We begin with the raw amino-acid sequence, 285 residues long: Mitochondrial substrate carrier family protein S (285 aa).

The Mitochondrial intermembrane segment spans residues 1-9; that stretch reads MSTERGLKD. 3 Solcar repeats span residues 4–87, 96–183, and 197–283; these read ERGL…MKVL, LTVG…CKRY, and LNLP…VIKL. Residues 10 to 30 traverse the membrane as a helical segment; sequence SIAGTVAGAACLFTGHPFDTI. The Mitochondrial matrix portion of the chain corresponds to 31 to 61; the sequence is RVRLQTSNTPIGIMECFRNTIKYEGFSGLYK. The chain crosses the membrane as a helical span at residues 62–82; the sequence is GVTSPLFGMMFETAVLFAGYG. Over 83 to 101 the chain is Mitochondrial intermembrane; that stretch reads QMKVLLQKDENTPLTVGQC. A helical membrane pass occupies residues 102-122; it reads AIAGGFAGVGASVVLTPVELV. The Mitochondrial matrix segment spans residues 123–150; it reads KCRLQVQTTGPQKYKGSLDCLVQILKEG. The helical transmembrane segment at 151-172 threads the bilayer; sequence GIRGAYRGFTPTIAREFVGNMA. Residues 173-199 are Mitochondrial intermembrane-facing; it reads FFSTYETCKRYFKNKENKPNDDDELNL. A helical transmembrane segment spans residues 200 to 220; the sequence is PALIISGGLGGMAYWTVLYPV. Over 221–258 the chain is Mitochondrial matrix; the sequence is DVAKSKIQISEGAGPSPSIVKVLKEIYSKEGVKGLFRG. Residues 259–277 form a helical membrane-spanning segment; sequence YTPTIIRSFPANAAMFSVY. The Mitochondrial intermembrane segment spans residues 278–285; sequence ELVIKLLG.

This sequence belongs to the mitochondrial carrier (TC 2.A.29) family.

It is found in the mitochondrion inner membrane. Its function is as follows. Mitochondrial solute carriers shuttle metabolites, nucleotides, and cofactors through the mitochondrial inner membrane. Mediates the transport of acylcarnitines of different length across the mitochondrial inner membrane from the cytosol to the mitochondrial matrix for their oxidation by the mitochondrial fatty acid-oxidation pathway. This chain is Mitochondrial substrate carrier family protein S (mcfS), found in Dictyostelium discoideum (Social amoeba).